The chain runs to 1201 residues: DNA-directed RNA polymerase subunit beta' (1201 aa).

Positions 60, 62, 75, and 78 each coordinate Zn(2+). The Mg(2+) site is built by aspartate 449, aspartate 451, and aspartate 453. Zn(2+)-binding residues include cysteine 818, cysteine 892, cysteine 899, and cysteine 902.

This sequence belongs to the RNA polymerase beta' chain family. As to quaternary structure, the RNAP catalytic core consists of 2 alpha, 1 beta, 1 beta' and 1 omega subunit. When a sigma factor is associated with the core the holoenzyme is formed, which can initiate transcription. Mg(2+) is required as a cofactor. The cofactor is Zn(2+).

It catalyses the reaction RNA(n) + a ribonucleoside 5'-triphosphate = RNA(n+1) + diphosphate. Its function is as follows. DNA-dependent RNA polymerase catalyzes the transcription of DNA into RNA using the four ribonucleoside triphosphates as substrates. The polypeptide is DNA-directed RNA polymerase subunit beta' (Listeria welshimeri serovar 6b (strain ATCC 35897 / DSM 20650 / CCUG 15529 / CIP 8149 / NCTC 11857 / SLCC 5334 / V8)).